The following is a 444-amino-acid chain: UDP-N-acetylglucosamine 1-carboxyvinyltransferase (444 aa).

Lys22–Asn23 contacts phosphoenolpyruvate. Residue Arg94 participates in UDP-N-acetyl-alpha-D-glucosamine binding. Residue Asp119 is the Proton donor of the active site. UDP-N-acetyl-alpha-D-glucosamine-binding residues include Asp309 and Val331.

This sequence belongs to the EPSP synthase family. MurA subfamily.

The protein resides in the cytoplasm. The catalysed reaction is phosphoenolpyruvate + UDP-N-acetyl-alpha-D-glucosamine = UDP-N-acetyl-3-O-(1-carboxyvinyl)-alpha-D-glucosamine + phosphate. It participates in cell wall biogenesis; peptidoglycan biosynthesis. Cell wall formation. Adds enolpyruvyl to UDP-N-acetylglucosamine. In Chlamydia trachomatis serovar A (strain ATCC VR-571B / DSM 19440 / HAR-13), this protein is UDP-N-acetylglucosamine 1-carboxyvinyltransferase.